The following is a 348-amino-acid chain: Phosphoribosylformylglycinamidine cyclo-ligase (348 aa).

This sequence belongs to the AIR synthase family.

The protein localises to the cytoplasm. The catalysed reaction is 2-formamido-N(1)-(5-O-phospho-beta-D-ribosyl)acetamidine + ATP = 5-amino-1-(5-phospho-beta-D-ribosyl)imidazole + ADP + phosphate + H(+). Its pathway is purine metabolism; IMP biosynthesis via de novo pathway; 5-amino-1-(5-phospho-D-ribosyl)imidazole from N(2)-formyl-N(1)-(5-phospho-D-ribosyl)glycinamide: step 2/2. This chain is Phosphoribosylformylglycinamidine cyclo-ligase, found in Citrifermentans bemidjiense (strain ATCC BAA-1014 / DSM 16622 / JCM 12645 / Bem) (Geobacter bemidjiensis).